The sequence spans 137 residues: uncharacterized protein (137 aa).

A Sm domain is found at 30–105; sequence SLLCVFTALR…IRFIQIPDKI (76 aa).

This is an uncharacterized protein from Dictyostelium discoideum (Social amoeba).